The primary structure comprises 443 residues: MSFLDLPEGLPERIIQCNSPYTVRFGVRLRGRMYSFIGWRSVREHCEPVKGDIRYASNADAEEVEALAALMTLKCSLVDVPFGGSKGALKIDPRGWTPQELEHITRRFTQEMNKRPDRARRQCVGSDIGTGEREMAWMMDEFRRANPTDVVTSGACVTGKPLSKGGIAGRAESTGRGVQFAIQSSLRDTRTPGLDGRRNLKGASTVIQGFGNVGYHAARFLSEEDDARVTVLAERDGYVANPEGLSIEALKQHQIRTGSILGFDGAKSIAGDMCGVEQPCDVLIPAAMENAIHAENAERMKAHLVVEAANGPVTFEADEILRSRGVTILPDLYVNAGGVVVSYFERVKNLTHIPFGLMERRRRERGNHTIATALERMTGKESPADMRDEFLEGGAEIDLVRSGLEDVMRSTWTRIADLMEQQPELGDYRTAAYVASIRQVADL.

The active site involves lysine 86.

The protein belongs to the Glu/Leu/Phe/Val dehydrogenases family.

It carries out the reaction L-glutamate + NAD(+) + H2O = 2-oxoglutarate + NH4(+) + NADH + H(+). The enzyme catalyses L-glutamate + NADP(+) + H2O = 2-oxoglutarate + NH4(+) + NADPH + H(+). This chain is Probable glutamate dehydrogenase, found in Sinorhizobium fredii (strain NBRC 101917 / NGR234).